The chain runs to 300 residues: L-arabinolactonase (300 aa).

Residues glutamate 22, asparagine 156, and aspartate 205 each contribute to the a divalent metal cation site.

The protein belongs to the SMP-30/CGR1 family. A divalent metal cation serves as cofactor.

It carries out the reaction L-arabinono-1,4-lactone + H2O = L-arabinonate + H(+). In terms of biological role, catalyzes the cleavage of L-arabino-gamma-lactone to L-arabonate. Is involved in a degradation pathway of L-arabinose that allows A.brasilense to grow on L-arabinose as a sole carbon source. Can also use D-galactono-1,4-lactone as substrate in vitro; however, the enzyme is probably not involved in the metabolism of D-galactose in vivo. This chain is L-arabinolactonase (araB), found in Azospirillum brasilense.